Consider the following 71-residue polypeptide: Small ribosomal subunit protein bS21 (71 aa).

The protein belongs to the bacterial ribosomal protein bS21 family.

The chain is Small ribosomal subunit protein bS21 from Alcanivorax borkumensis (strain ATCC 700651 / DSM 11573 / NCIMB 13689 / SK2).